The primary structure comprises 323 residues: 8-oxo-dGDP phosphatase NUDT18 (323 aa).

The 131-residue stretch at 37–167 (RLRKNVCYVV…DILHLVELAA (131 aa)) folds into the Nudix hydrolase domain. Leucine 58 is a Mg(2+) binding site. The Nudix box signature appears at 76 to 97 (GRMEPGETIVEALQREVKEEAG).

Belongs to the Nudix hydrolase family. Requires Mn(2+) as cofactor. The cofactor is Mg(2+).

It carries out the reaction 8-oxo-dGDP + H2O = 8-oxo-dGMP + phosphate + H(+). The enzyme catalyses 8-oxo-dADP + H2O = 8-oxo-dAMP + phosphate + H(+). It catalyses the reaction 2-oxo-dADP + H2O = 2-oxo-dAMP + phosphate + H(+). The catalysed reaction is 8-oxo-GDP + H2O = 8-oxo-GMP + phosphate + H(+). Its function is as follows. Mediates the hydrolysis of oxidized nucleoside diphosphate derivatives. Hydrolyzes 8-oxo-7,8-dihydroguanine (8-oxo-Gua)-containing deoxyribo- and ribonucleoside diphosphates to the monophosphates. Hydrolyzes 8-oxo-dGDP and 8-oxo-GDP with the same efficiencies. Also hydrolyzes 8-OH-dADP and 2-OH-dADP. Exhibited no or minimal hydrolysis activity against 8-oxo-dGTP, 8-oxo-GTP, dGTP, GTP, dGDP and GDP. Probably removes oxidized guanine nucleotides from both the DNA and RNA precursor pools. The sequence is that of 8-oxo-dGDP phosphatase NUDT18 from Homo sapiens (Human).